Here is a 372-residue protein sequence, read N- to C-terminus: tRNA pseudouridine synthase D (372 aa).

The active-site Nucleophile is Asp-85. The TRUD domain occupies 160 to 330 (GFTNYFGYQR…MQGSRRFMWG (171 aa)).

The protein belongs to the pseudouridine synthase TruD family.

It catalyses the reaction uridine(13) in tRNA = pseudouridine(13) in tRNA. Functionally, responsible for synthesis of pseudouridine from uracil-13 in transfer RNAs. The sequence is that of tRNA pseudouridine synthase D from Campylobacter jejuni subsp. jejuni serotype O:23/36 (strain 81-176).